The primary structure comprises 241 residues: Carboxy-S-adenosyl-L-methionine synthase (241 aa).

S-adenosyl-L-methionine contacts are provided by residues Tyr38, 63–65 (GCS), 88–89 (DN), 116–117 (DI), Asn131, and Arg198.

Belongs to the class I-like SAM-binding methyltransferase superfamily. Cx-SAM synthase family. In terms of assembly, homodimer.

The enzyme catalyses prephenate + S-adenosyl-L-methionine = carboxy-S-adenosyl-L-methionine + 3-phenylpyruvate + H2O. Functionally, catalyzes the conversion of S-adenosyl-L-methionine (SAM) to carboxy-S-adenosyl-L-methionine (Cx-SAM). This Haemophilus influenzae (strain ATCC 51907 / DSM 11121 / KW20 / Rd) protein is Carboxy-S-adenosyl-L-methionine synthase.